The sequence spans 219 residues: UPF0502 protein Gura_3445 (219 aa).

A disordered region spans residues 162 to 181 (AGEPDLPDDTPAPPPEPARQ).

It belongs to the UPF0502 family.

This is UPF0502 protein Gura_3445 from Geotalea uraniireducens (strain Rf4) (Geobacter uraniireducens).